Reading from the N-terminus, the 193-residue chain is 2',3'-cyclic-nucleotide 3'-phosphodiesterase (193 aa).

Catalysis depends on histidine 40, which acts as the Proton donor/acceptor. Residue threonine 42 participates in substrate binding. The Proton donor/acceptor role is filled by histidine 129. Positions 131 and 134 each coordinate substrate.

The protein belongs to the 2H phosphoesterase superfamily. CPD1 family.

It is found in the golgi apparatus. It catalyses the reaction a nucleoside 2',3'-cyclic phosphate + H2O = a nucleoside 2'-phosphate + H(+). In terms of biological role, involved in the metabolism of ADP-ribose 1',2'-cyclic phosphate which is produced as a consequence of tRNA splicing. The polypeptide is 2',3'-cyclic-nucleotide 3'-phosphodiesterase (CPD1) (Phaeosphaeria nodorum (strain SN15 / ATCC MYA-4574 / FGSC 10173) (Glume blotch fungus)).